Reading from the N-terminus, the 182-residue chain is Transmembrane and coiled-coil domain-containing protein 2 (182 aa).

2 helical membrane-spanning segments follow: residues 10–30 (IIID…TLLG) and 50–70 (VQVI…YALW). Positions 122–149 (GLQEKILKKLQTVENKVKDLEGMIISQK) form a coiled coil.

The protein resides in the membrane. The polypeptide is Transmembrane and coiled-coil domain-containing protein 2 (TMCO2) (Bos taurus (Bovine)).